The primary structure comprises 116 residues: uncharacterized protein (116 aa).

Residues 6-60 (LKKCRKQKKLTQQNMADKLGITRPAYTAYELGSREPDYKTLINISNILDVSLDYL) enclose the HTH cro/C1-type domain. A DNA-binding region (H-T-H motif) is located at residues 17–36 (QQNMADKLGITRPAYTAYEL).

This is an uncharacterized protein from Bacillus subtilis (strain 168).